A 183-amino-acid polypeptide reads, in one-letter code: A-type ATP synthase subunit E (183 aa).

The protein belongs to the V-ATPase E subunit family. As to quaternary structure, has multiple subunits with at least A(3), B(3), C, D, E, F, H, I and proteolipid K(x).

It is found in the cell membrane. Component of the A-type ATP synthase that produces ATP from ADP in the presence of a proton gradient across the membrane. The chain is A-type ATP synthase subunit E from Methanosarcina acetivorans (strain ATCC 35395 / DSM 2834 / JCM 12185 / C2A).